Consider the following 720-residue polypeptide: Cyclic nucleotide-gated ion channel 17 (720 aa).

At 1–85 the chain is on the cytoplasmic side; that stretch reads MELRKDKLLM…SEIVLKWNWV (85 aa). A helical transmembrane segment spans residues 86-106; the sequence is FIVSCMVALFIDPLYFFVPAI. The Extracellular portion of the chain corresponds to 107–121; that stretch reads GGDKNYPCARTDTSL. The helical transmembrane segment at 122 to 142 threads the bilayer; it reads SILVTFFRTIADLFYLLHIFI. Residues 143-178 lie on the Cytoplasmic side of the membrane; it reads KFRTGFIAPNSSTRVFGRGELVMDPKAIAWRYIKSD. The helical transmembrane segment at 179-199 threads the bilayer; sequence FIIDLIATLPLPQIVIWFVIS. Over 200–211 the chain is Extracellular; sequence TTKSYRFDHNNN. The helical transmembrane segment at 212 to 232 threads the bilayer; sequence AIALIVLLQYIPRFYLIIPLS. The Cytoplasmic segment spans residues 233 to 252; that stretch reads SQIVKATGVVTKTAWAGAAY. The helical transmembrane segment at 253–273 threads the bilayer; that stretch reads NLLLYMLASHVLGAAWYILSV. Residues 274–377 are Extracellular-facing; the sequence is DRYTSCWKSR…LSTTMFMGET (104 aa). A helical membrane pass occupies residues 378–398; it reads TFAVLIAIFGLVLFAHLIGNM. Over 399–720 the chain is Cytoplasmic; that stretch reads QTYLQSLTVR…EPDFSAEHDD (322 aa). Residues 481–605 and glutamate 552 contribute to the a nucleoside 3',5'-cyclic phosphate site; that span reads FFSQ…SKKL. The tract at residues 597-612 is calmodulin-binding; it reads FRRLHSKKLQHTFRFY. The IQ domain maps to 617-646; the sequence is RTWAACFIQAAWRRYKRRVMENNLTAIESM.

Belongs to the cyclic nucleotide-gated cation channel (TC 1.A.1.5) family. In terms of assembly, homotetramer or heterotetramer. Part of a functional complex containing PSKR1, BAK1, CNGC17, and AHA. Interacts with AHA1, AHA2, and BAK1, but not with PSKR1 or BRI1.

It localises to the cell membrane. Functionally, probable cyclic nucleotide-gated ion channel. Forms a functional cation-translocating unit with AHAs that is activated by PSKR1/BAK1 and possibly other BAK1/RLK complexes. Required for PSK-induced protoplast expansion. In Arabidopsis thaliana (Mouse-ear cress), this protein is Cyclic nucleotide-gated ion channel 17.